The primary structure comprises 1048 residues: [F-actin]-monooxygenase MICAL1 (1048 aa).

The segment at 1–489 (MASPASTNPA…QDLYDMMDKE (489 aa)) is monooxygenase domain. FAD-binding positions include Cys-95, 114 to 116 (EKR), 121 to 123 (RHN), Phe-181, Tyr-293, and Asp-393. Thr-475 carries the post-translational modification Phosphothreonine. A compositionally biased stretch (basic and acidic residues) spans 488–502 (KEHAQRKSDEPDSRK). The interval 488-508 (KEHAQRKSDEPDSRKTTTGSA) is disordered. A Calponin-homology (CH) domain is found at 507 to 611 (SAGTEELLHW…YLSHFHSAFK (105 aa)). Position 616 is a phosphoserine (Ser-616). A disordered region spans residues 643-676 (TRAKVDEETPSTEEPPVSEPSMSPNTPELSEHQE). The segment covering 654–666 (TEEPPVSEPSMSP) has biased composition (low complexity). The region spanning 681-743 (ELCELCGKHL…LQHLPQEDQK (63 aa)) is the LIM zinc-binding domain. Positions 683, 686, 704, 707, 710, 713, 733, and 736 each coordinate Zn(2+). Disordered regions lie at residues 741–787 (DQKE…QPAR), 805–825 (IIPDSGAEPPPKPPRSCSDLA), and 839–873 (PVQAPQVPEAIEKGDDEEEEEEEEEEEEEPLPPLE). Positions 747-765 (NNGSLESQELPTPGDSNMQ) are enriched in polar residues. Residues 772–787 (PVTRVSPVPSPSQPAR) show a composition bias toward low complexity. Phosphoserine is present on residues Ser-777 and Ser-781. 3 coiled-coil regions span residues 847–867 (EAIEKGDDEEEEEEEEEEEEE), 906–949 (EEEM…ESSS), and 974–1031 (EEAE…VNQR). Residues 852 to 868 (GDDEEEEEEEEEEEEEP) are compositionally biased toward acidic residues. Positions 905-1048 (KEEEMKRFCK…EERRLREMPA (144 aa)) constitute a bMERB domain.

The protein belongs to the Mical family. In terms of assembly, associates with the SH3 domain of NEDD9. Interacts with VIM and PLXNA3. Interacts with RAB1B, RAB8A, RAB10, RAB13 and RAB15 (in their GTP-bound forms); binding to RAB1B is of low affinity compared to other Rab proteins; at least in case of RAB8A and RAB10 can bind 2 molecules of the Rab proteins simultaneously. Interacts with STK38 and STK38L. Interacts with GRAF1/ARHGAP26, GRAF2/ARHGAP10, RAB8A, RAB8B and RAB10; may bind simultaneously to GRAFs and Rabs and connects GRAFs to Rabs. Does not interact with RAB1 and RAB11A. It depends on FAD as a cofactor. As to expression, expressed in the postnatal and adult hippocampus; found in dentate gyrus, the polymorphic layer, cornu ammonis (CA) 1-3 and in mossy fibers of the striatum lucidum. In adult hippocampus strongly expressed in CA3 pyramidial neurons.

The protein resides in the cytoplasm. The protein localises to the cytoskeleton. It localises to the endosome membrane. Its subcellular location is the midbody. The enzyme catalyses L-methionyl-[F-actin] + NADPH + O2 + H(+) = L-methionyl-(R)-S-oxide-[F-actin] + NADP(+) + H2O. The catalysed reaction is NADPH + O2 + H(+) = H2O2 + NADP(+). Its function is as follows. Monooxygenase that promotes depolymerization of F-actin by mediating oxidation of specific methionine residues on actin to form methionine-sulfoxide, resulting in actin filament disassembly and preventing repolymerization. In the absence of actin, it also functions as a NADPH oxidase producing H(2)O(2). Acts as a cytoskeletal regulator that connects NEDD9 to intermediate filaments. Also acts as a negative regulator of apoptosis via its interaction with STK38 and STK38L; acts by antagonizing STK38 and STK38L activation by MST1/STK4. Involved in regulation of lamina-specific connectivity in the nervous system such as the development of lamina-restricted hippocampal connections. Through redox regulation of the actin cytoskeleton controls the intracellular distribution of secretory vesicles containing L1/neurofascin/NgCAM family proteins in neurons, thereby regulating their cell surface levels. May act as Rab effector protein and play a role in vesicle trafficking. Promotes endosomal tubule extension by associating with RAB8 (RAB8A or RAB8B), RAB10 and GRAF (GRAF1/ARHGAP26 or GRAF2/ARHGAP10) on the endosomal membrane which may connect GRAFs to Rabs, thereby participating in neosynthesized Rab8-Rab10-Rab11-dependent protein export. In Mus musculus (Mouse), this protein is [F-actin]-monooxygenase MICAL1 (Mical1).